Consider the following 492-residue polypeptide: Aspartyl/glutamyl-tRNA(Asn/Gln) amidotransferase subunit B (492 aa).

It belongs to the GatB/GatE family. GatB subfamily. In terms of assembly, heterotrimer of A, B and C subunits.

It carries out the reaction L-glutamyl-tRNA(Gln) + L-glutamine + ATP + H2O = L-glutaminyl-tRNA(Gln) + L-glutamate + ADP + phosphate + H(+). It catalyses the reaction L-aspartyl-tRNA(Asn) + L-glutamine + ATP + H2O = L-asparaginyl-tRNA(Asn) + L-glutamate + ADP + phosphate + 2 H(+). In terms of biological role, allows the formation of correctly charged Asn-tRNA(Asn) or Gln-tRNA(Gln) through the transamidation of misacylated Asp-tRNA(Asn) or Glu-tRNA(Gln) in organisms which lack either or both of asparaginyl-tRNA or glutaminyl-tRNA synthetases. The reaction takes place in the presence of glutamine and ATP through an activated phospho-Asp-tRNA(Asn) or phospho-Glu-tRNA(Gln). The sequence is that of Aspartyl/glutamyl-tRNA(Asn/Gln) amidotransferase subunit B from Prochlorococcus marinus (strain SARG / CCMP1375 / SS120).